The primary structure comprises 422 residues: Gamma-glutamyl phosphate reductase (422 aa).

This sequence belongs to the gamma-glutamyl phosphate reductase family.

It is found in the cytoplasm. The enzyme catalyses L-glutamate 5-semialdehyde + phosphate + NADP(+) = L-glutamyl 5-phosphate + NADPH + H(+). It functions in the pathway amino-acid biosynthesis; L-proline biosynthesis; L-glutamate 5-semialdehyde from L-glutamate: step 2/2. Functionally, catalyzes the NADPH-dependent reduction of L-glutamate 5-phosphate into L-glutamate 5-semialdehyde and phosphate. The product spontaneously undergoes cyclization to form 1-pyrroline-5-carboxylate. The protein is Gamma-glutamyl phosphate reductase of Nitrosomonas europaea (strain ATCC 19718 / CIP 103999 / KCTC 2705 / NBRC 14298).